A 428-amino-acid polypeptide reads, in one-letter code: Isocitrate lyase 1 (428 aa).

91–93 (SGW) is a binding site for substrate. Residue Asp-153 participates in Mg(2+) binding. The active-site Proton acceptor is the Cys-191. Substrate contacts are provided by residues 192–193 (GH), Arg-228, 313–317 (NCSPS), and Thr-347.

Belongs to the isocitrate lyase/PEP mutase superfamily. Isocitrate lyase family. Homotetramer. Requires Mg(2+) as cofactor.

The enzyme catalyses D-threo-isocitrate = glyoxylate + succinate. The catalysed reaction is (2S,3R)-3-hydroxybutane-1,2,3-tricarboxylate = pyruvate + succinate. Its pathway is carbohydrate metabolism; glyoxylate cycle; (S)-malate from isocitrate: step 1/2. In terms of biological role, involved in the persistence and virulence of M.tuberculosis. Catalyzes the reversible formation of succinate and glyoxylate from isocitrate, a key step of the glyoxylate cycle, which operates as an anaplerotic route for replenishing the tricarboxylic acid cycle during growth on fatty acid substrates. It also catalyzes the formation of pyruvate and succinate from 2-methylisocitrate, a key step in the methylcitrate cycle (propionate degradation route). In Mycobacterium tuberculosis (strain ATCC 35801 / TMC 107 / Erdman), this protein is Isocitrate lyase 1 (icl1).